The chain runs to 431 residues: GTPase Obg (431 aa).

In terms of domain architecture, Obg spans 1–158; it reads MFVDQVKISL…IEVTLELKLL (158 aa). Positions 118-144 are disordered; that stretch reads KGGRGGRGNSRFASPRNPAPDFSENGE. The 172-residue stretch at 159–330 folds into the OBG-type G domain; it reads ADVGLVGFPS…LLYAIADKLE (172 aa). GTP-binding positions include 165–172, 190–194, 212–215, 282–285, and 311–313; these read GFPSVGKS, FTTIK, DLPG, NKMD, and STF. Mg(2+) is bound by residues Ser172 and Thr192. In terms of domain architecture, OCT spans 353–431; that stretch reads KHTPSQDKFT…ILGGEFEFVE (79 aa).

This sequence belongs to the TRAFAC class OBG-HflX-like GTPase superfamily. OBG GTPase family. In terms of assembly, monomer. Mg(2+) serves as cofactor.

It localises to the cytoplasm. Functionally, an essential GTPase which binds GTP, GDP and possibly (p)ppGpp with moderate affinity, with high nucleotide exchange rates and a fairly low GTP hydrolysis rate. Plays a role in control of the cell cycle, stress response, ribosome biogenesis and in those bacteria that undergo differentiation, in morphogenesis control. This chain is GTPase Obg, found in Staphylococcus saprophyticus subsp. saprophyticus (strain ATCC 15305 / DSM 20229 / NCIMB 8711 / NCTC 7292 / S-41).